The sequence spans 183 residues: Potassium-transporting ATPase KdpC subunit (183 aa).

Residues 11–31 (LILLLAVVTGALYPLAVTGVA) form a helical membrane-spanning segment.

It belongs to the KdpC family. The system is composed of three essential subunits: KdpA, KdpB and KdpC.

The protein resides in the cell inner membrane. Its function is as follows. Part of the high-affinity ATP-driven potassium transport (or Kdp) system, which catalyzes the hydrolysis of ATP coupled with the electrogenic transport of potassium into the cytoplasm. This subunit acts as a catalytic chaperone that increases the ATP-binding affinity of the ATP-hydrolyzing subunit KdpB by the formation of a transient KdpB/KdpC/ATP ternary complex. The polypeptide is Potassium-transporting ATPase KdpC subunit (Pseudomonas putida (strain W619)).